The primary structure comprises 250 residues: 26 kDa periplasmic immunogenic protein (250 aa).

Positions 1 to 28 (MNTRASNFLAASFSTIMLVGAFSLPAFA) are cleaved as a signal peptide.

It localises to the periplasm. This is 26 kDa periplasmic immunogenic protein (bp26) from Brucella abortus (strain S19).